A 442-amino-acid chain; its full sequence is Glutamate-1-semialdehyde 2,1-aminomutase (442 aa).

At Lys282 the chain carries N6-(pyridoxal phosphate)lysine.

The protein belongs to the class-III pyridoxal-phosphate-dependent aminotransferase family. HemL subfamily. As to quaternary structure, homodimer. Pyridoxal 5'-phosphate is required as a cofactor.

The protein resides in the cytoplasm. The catalysed reaction is (S)-4-amino-5-oxopentanoate = 5-aminolevulinate. It participates in porphyrin-containing compound metabolism; protoporphyrin-IX biosynthesis; 5-aminolevulinate from L-glutamyl-tRNA(Glu): step 2/2. This chain is Glutamate-1-semialdehyde 2,1-aminomutase, found in Polaromonas sp. (strain JS666 / ATCC BAA-500).